We begin with the raw amino-acid sequence, 188 residues long: Quinone reductase (188 aa).

Residues 13–20 (SLRKGSFN), 82–85 (EYNY), and Ser-117 contribute to the FMN site.

The protein belongs to the SsuE family. In terms of assembly, homotetramer. Dimer of dimers. The tetrameric configuration has a central role in chromate reductase activity. Requires FMN as cofactor.

The enzyme catalyses a quinone + NADH + H(+) = a quinol + NAD(+). It catalyses the reaction a quinone + NADPH + H(+) = a quinol + NADP(+). The catalysed reaction is Cr(6+) + 2 NADH + O2 = Cr(3+) + superoxide + 2 NAD(+) + 2 H(+). It carries out the reaction Cr(6+) + 2 NADPH + O2 = Cr(3+) + superoxide + 2 NADP(+) + 2 H(+). Catalyzes the reduction of quinones. Acts by simultaneous two-electron transfer, avoiding formation of highly reactive semiquinone intermediates and producing quinols that promote tolerance of H(2)O(2). Quinone reduction is probably the primary biological role of ChrR. Can also reduce toxic chromate to insoluble and less toxic Cr(3+). Catalyzes the transfer of three electrons to Cr(6+) producing Cr(3+) and one electron to molecular oxygen without producing the toxic Cr(5+) species and only producing a minimal amount of reactive oxygen species (ROS). Chromate reduction protects the cell against chromate toxicity, but is likely a secondary activity. In Escherichia coli O157:H7, this protein is Quinone reductase (chrR).